A 258-amino-acid chain; its full sequence is Na(+)-translocating NADH-quinone reductase subunit C (258 aa).

The helical transmembrane segment at 14-34 threads the bilayer; the sequence is LIVVLAVSLICSVIVAGAVVG. The residue at position 226 (Ser-226) is an FMN phosphoryl serine.

Belongs to the NqrC family. As to quaternary structure, composed of six subunits; NqrA, NqrB, NqrC, NqrD, NqrE and NqrF. Requires FMN as cofactor.

Its subcellular location is the cell inner membrane. The enzyme catalyses a ubiquinone + n Na(+)(in) + NADH + H(+) = a ubiquinol + n Na(+)(out) + NAD(+). NQR complex catalyzes the reduction of ubiquinone-1 to ubiquinol by two successive reactions, coupled with the transport of Na(+) ions from the cytoplasm to the periplasm. NqrA to NqrE are probably involved in the second step, the conversion of ubisemiquinone to ubiquinol. The polypeptide is Na(+)-translocating NADH-quinone reductase subunit C (Neisseria meningitidis serogroup A / serotype 4A (strain DSM 15465 / Z2491)).